Consider the following 192-residue polypeptide: LexA repressor (192 aa).

Residues 15-35 constitute a DNA-binding region (H-T-H motif); sequence RAEIARELGFRSANAAEEHLK. Catalysis depends on for autocatalytic cleavage activity residues Ser109 and Lys146.

It belongs to the peptidase S24 family. In terms of assembly, homodimer.

The catalysed reaction is Hydrolysis of Ala-|-Gly bond in repressor LexA.. Functionally, represses a number of genes involved in the response to DNA damage (SOS response), including recA and lexA. In the presence of single-stranded DNA, RecA interacts with LexA causing an autocatalytic cleavage which disrupts the DNA-binding part of LexA, leading to derepression of the SOS regulon and eventually DNA repair. The sequence is that of LexA repressor from Photobacterium profundum (strain SS9).